The sequence spans 703 residues: Ubiquitin-like modifier-activating enzyme ATG7 (703 aa).

The residue at position 2 (alanine 2) is an N-acetylalanine. The short motif at 15-17 (FAP) is the FAP motif element. Residue lysine 45 forms a Glycyl lysine isopeptide (Lys-Gly) (interchain with G-Cter in ubiquitin) linkage. Residue cysteine 572 is the Glycyl thioester intermediate of the active site. Serine 698 carries the phosphoserine modification.

It belongs to the ATG7 family. In terms of assembly, homodimer. Interacts with ATG3; this interaction is essential for the transfer of ATG8-like proteins's thioester from ATG7 to ATG3 and plays a role in the conjugation of ATG12 to ATG5. Interacts with ATG12. Forms intermediate conjugates with GABARAPL1. Forms intermediate conjugates with ATG8-like proteins such as GABARAP, GABARAPL2 or MAP1LC3A. Interacts with EP300 acetyltransferase. Interacts with FOXO1. In terms of processing, acetylated by EP300. Post-translationally, polyubiquitinated on Lys-45 via 'Lys-63'-linked ubiquitin by TRIM32; this modification positiely regulates ATG8 and ATG12 activating enzyme activity leading to initiation of autophagy under metabolic stress. In terms of tissue distribution, widely expressed, especially in kidney, liver, lymph nodes and bone marrow.

The protein localises to the cytoplasm. Its subcellular location is the preautophagosomal structure. Functionally, E1-like activating enzyme involved in the 2 ubiquitin-like systems required for cytoplasm to vacuole transport (Cvt) and autophagy. Activates ATG12 for its conjugation with ATG5 as well as the ATG8 family proteins for their conjugation with phosphatidylethanolamine. Both systems are needed for the ATG8 association to Cvt vesicles and autophagosomes membranes. Required for autophagic death induced by caspase-8 inhibition. Facilitates LC3-I lipidation with phosphatidylethanolamine to form LC3-II which is found on autophagosomal membranes. Required for mitophagy which contributes to regulate mitochondrial quantity and quality by eliminating the mitochondria to a basal level to fulfill cellular energy requirements and preventing excess ROS production. Modulates p53/TP53 activity to regulate cell cycle and survival during metabolic stress. Also plays a key role in the maintenance of axonal homeostasis, the prevention of axonal degeneration, the maintenance of hematopoietic stem cells, the formation of Paneth cell granules, as well as in adipose differentiation. Plays a role in regulating the liver clock and glucose metabolism by mediating the autophagic degradation of CRY1 (clock repressor) in a time-dependent manner. This is Ubiquitin-like modifier-activating enzyme ATG7 from Homo sapiens (Human).